The chain runs to 128 residues: DELTA-urthionin-Uf1a (128 aa).

The N-terminal stretch at 1 to 24 (MEGKTVIVSLLLLSIVVGQIQVEA) is a signal peptide. Cystine bridges form between cysteine 27–cysteine 64, cysteine 28–cysteine 56, and cysteine 40–cysteine 50. A propeptide spans 67 to 128 (LSIPEVTGEA…LCTKNSIETA (62 aa)) (acidic domain).

This sequence belongs to the plant thionin (TC 1.C.44) family. Expressed in trichomes, that are stiff epidermal hairs located on the surface of petioles and leaves.

The protein localises to the secreted. Its function is as follows. Plant defense protein that causes pain by probable disruption of cell membranes. Shows cytotoxic activity against the neuroblastoma cell line SH-SY5Y and slightly weaker activity against several non-neuronal cell lines. In vivo, intraplantar injection into mice causes several nocifensive responses, along with swelling and redness. In Urtica ferox (Tree nettle), this protein is DELTA-urthionin-Uf1a.